The following is a 947-amino-acid chain: Pyruvate, phosphate dikinase 1, chloroplastic (947 aa).

The N-terminal 62 residues, 1–62 (MAASVSRAIC…GRGQHCSPLR (62 aa)), are a transit peptide targeting the chloroplast. Residues 21–54 (DREATSFARRSVAAPRPPHAKAAGVIRSDSGAGR) are disordered. An N-acetylalanine; partial modification is found at Ala-63. Phosphothreonine is present on Thr-309. Phosphoserine is present on Ser-506. Thr-527 carries the phosphothreonine; by PDRP1 modification. Ser-528 carries the phosphoserine; by PDRP1 modification. His-529 serves as the catalytic Tele-phosphohistidine intermediate. Substrate contacts are provided by Arg-635, Arg-692, Glu-821, Gly-842, Thr-843, Asn-844, and Asp-845. Position 821 (Glu-821) interacts with Mg(2+). Position 845 (Asp-845) interacts with Mg(2+). Cys-907 functions as the Proton donor in the catalytic mechanism.

The protein belongs to the PEP-utilizing enzyme family. Homotetramer. Requires Mg(2+) as cofactor. In terms of processing, phosphorylation of Thr-527 in the dark inactivates the enzyme, dephosphorylation upon light stimulation reactivates the enzyme. More highly phosphorylated when grown under high rather than low light regimes (70 vs 900 umol photons/m-2/s). the degree of phosphorylation is strictly regulated by light intensity and the light/dark transition has no influence. Phosphorylated in both mesophyll and bundle sheath cells. The phosphorylation at Ser-528 may be important for the phosphorylation at Thr-527 and may also be regulated by light intensity. As to expression, isoform C4PPDKZM1 mainly localized in mesophyll cells and only a low level is found in bundle sheath cells. Isoform CYPPDKZM1 expressed in roots, stems and etiolated leaves.

Its subcellular location is the plastid. It localises to the chloroplast. The protein resides in the cytoplasm. The catalysed reaction is pyruvate + phosphate + ATP = phosphoenolpyruvate + AMP + diphosphate + H(+). It functions in the pathway photosynthesis; C4 acid pathway. Its activity is regulated as follows. Activated by light-induced dephosphorylation. Inhibited by dark-induced phosphorylation. Both reactions are catalyzed by PDRP1. Inactivated by cold due to the dissociation of the homotetramer. Independent of circadian regulation. Functionally, formation of phosphoenolpyruvate, which is the primary acceptor of CO(2) in C4 and some Crassulacean acid metabolism plants. This is Pyruvate, phosphate dikinase 1, chloroplastic from Zea mays (Maize).